The following is a 276-amino-acid chain: Ammonia monooxygenase alpha subunit (276 aa).

Transmembrane regions (helical) follow at residues 29 to 49 (VYFP…FMLL), 66 to 86 (PVVT…YLWV), 96 to 116 (LCVV…FYWW), 123 to 143 (FVTP…LYLT), and 150 to 170 (ALVG…PIFG). Residues D187, H191, and H204 each coordinate Cu(+). Residues 219-239 (VIAAFFSAFVSMLMFTVWWYL) traverse the membrane as a helical segment.

The soluble ammonia monooxygenase is a nonamer composed of three alpha subunits (AmoA), three beta subunits (AmoB) and three gamma subunits (Cytochrome c1 PetC). Cu(+) serves as cofactor.

Its subcellular location is the cell membrane. It is found in the cytoplasm. It catalyses the reaction AH2 + NH4(+) + O2 = hydroxylamine + A + H2O + H(+). With respect to regulation, in vitro, inhibited by acetylene. In fact, acetylene is oxidized to ketene which binds irreversibly to His-191 of ammonia monooxygenase alpha subunit (AmoA). Its function is as follows. Part of the ammonia monooxygenase complex, which catalyzes the oxidation of ammonia to hydroxylamine, the first reaction in the process of ammonia oxidation to nitrite. This is Ammonia monooxygenase alpha subunit from Nitrosomonas europaea (strain ATCC 19718 / CIP 103999 / KCTC 2705 / NBRC 14298).